The following is a 214-amino-acid chain: Dynein axonemal assembly factor 6 (214 aa).

Disordered regions lie at residues 1–22 (MESE…QNVD) and 34–68 (ALSK…NIGP).

This sequence belongs to the PIH1 family. As to quaternary structure, interacts with HSPA1A/B and HSP90AA1. Interacts with DNAAF2 and DNAAF4. Interacts wuth DNAI2. As to expression, expressed in testis, small intestine, prostate, adrenal gland, spleen, lung, bladder, breast and ovary. Expressed in ciliated epithelial cells.

The protein resides in the cytoplasm. Its subcellular location is the golgi apparatus. It localises to the trans-Golgi network. Functionally, plays a role in cytoplasmic pre-assembly of axonemal dynein. The polypeptide is Dynein axonemal assembly factor 6 (Homo sapiens (Human)).